A 909-amino-acid chain; its full sequence is Protein translocase subunit SecA (909 aa).

Residues Gln-87 and Gly-105 to Thr-109 contribute to the ATP site. The interval Leu-246–Ile-265 is disordered. Positions Glu-254 to Ile-265 are enriched in basic and acidic residues. Asp-512 is a binding site for ATP. The span at Glu-834–Thr-858 shows a compositional bias: basic and acidic residues. The disordered stretch occupies residues Glu-834–Leu-899. Positions Ala-859 to Ala-875 are enriched in low complexity. Zn(2+) contacts are provided by Cys-893, Cys-895, Cys-904, and His-905.

This sequence belongs to the SecA family. As to quaternary structure, monomer and homodimer. Part of the essential Sec protein translocation apparatus which comprises SecA, SecYEG and auxiliary proteins SecDF-YajC and YidC. It depends on Zn(2+) as a cofactor.

It localises to the cell inner membrane. The protein localises to the cytoplasm. The catalysed reaction is ATP + H2O + cellular proteinSide 1 = ADP + phosphate + cellular proteinSide 2.. Part of the Sec protein translocase complex. Interacts with the SecYEG preprotein conducting channel. Has a central role in coupling the hydrolysis of ATP to the transfer of proteins into and across the cell membrane, serving both as a receptor for the preprotein-SecB complex and as an ATP-driven molecular motor driving the stepwise translocation of polypeptide chains across the membrane. The chain is Protein translocase subunit SecA from Pseudoalteromonas atlantica (strain T6c / ATCC BAA-1087).